Consider the following 421-residue polypeptide: Histidine--tRNA ligase (421 aa).

This sequence belongs to the class-II aminoacyl-tRNA synthetase family. In terms of assembly, homodimer.

The protein localises to the cytoplasm. It carries out the reaction tRNA(His) + L-histidine + ATP = L-histidyl-tRNA(His) + AMP + diphosphate + H(+). The polypeptide is Histidine--tRNA ligase (Francisella tularensis subsp. holarctica (strain LVS)).